The primary structure comprises 182 residues: Peptidyl-prolyl cis-trans isomerase C, mitochondrial (182 aa).

The transit peptide at 1 to 20 directs the protein to the mitochondrion; it reads MFKRSIIQQSRLFSNSASRL. Positions 25 to 181 constitute a PPIase cyclophilin-type domain; it reads FFDPAVNGTK…AEIVIEEAGE (157 aa).

The protein belongs to the cyclophilin-type PPIase family.

The protein localises to the mitochondrion matrix. It carries out the reaction [protein]-peptidylproline (omega=180) = [protein]-peptidylproline (omega=0). Its activity is regulated as follows. Inhibited by the immunosuppressant drug cyclosporin A and by SDZ NIM811, a PPIase inhibitor. In terms of biological role, PPIases accelerate the folding of proteins. It catalyzes the cis-trans isomerization of proline imidic peptide bonds in oligopeptides. This isozyme is required for growth on lactate at high temperature. This Saccharomyces cerevisiae (strain ATCC 204508 / S288c) (Baker's yeast) protein is Peptidyl-prolyl cis-trans isomerase C, mitochondrial (CPR3).